Here is a 311-residue protein sequence, read N- to C-terminus: Ribose-phosphate pyrophosphokinase (311 aa).

ATP is bound by residues 34–36 (DQE) and 93–94 (RQ). Residues histidine 127 and aspartate 168 each coordinate Mg(2+). Lysine 191 is a catalytic residue. Residues arginine 193, aspartate 217, and 221 to 225 (DSGGT) contribute to the D-ribose 5-phosphate site.

Belongs to the ribose-phosphate pyrophosphokinase family. Class I subfamily. As to quaternary structure, homohexamer. Requires Mg(2+) as cofactor.

It is found in the cytoplasm. The enzyme catalyses D-ribose 5-phosphate + ATP = 5-phospho-alpha-D-ribose 1-diphosphate + AMP + H(+). The protein operates within metabolic intermediate biosynthesis; 5-phospho-alpha-D-ribose 1-diphosphate biosynthesis; 5-phospho-alpha-D-ribose 1-diphosphate from D-ribose 5-phosphate (route I): step 1/1. Its function is as follows. Involved in the biosynthesis of the central metabolite phospho-alpha-D-ribosyl-1-pyrophosphate (PRPP) via the transfer of pyrophosphoryl group from ATP to 1-hydroxyl of ribose-5-phosphate (Rib-5-P). The protein is Ribose-phosphate pyrophosphokinase of Mesorhizobium japonicum (strain LMG 29417 / CECT 9101 / MAFF 303099) (Mesorhizobium loti (strain MAFF 303099)).